Here is a 595-residue protein sequence, read N- to C-terminus: Elongation factor 4 (595 aa).

Positions 2–183 (KNIRNFCIIA…AIVEQVPAPA (182 aa)) constitute a tr-type G domain. Residues 14–19 (DHGKST) and 130–133 (NKVD) each bind GTP.

It belongs to the TRAFAC class translation factor GTPase superfamily. Classic translation factor GTPase family. LepA subfamily.

The protein resides in the cell inner membrane. It carries out the reaction GTP + H2O = GDP + phosphate + H(+). Functionally, required for accurate and efficient protein synthesis under certain stress conditions. May act as a fidelity factor of the translation reaction, by catalyzing a one-codon backward translocation of tRNAs on improperly translocated ribosomes. Back-translocation proceeds from a post-translocation (POST) complex to a pre-translocation (PRE) complex, thus giving elongation factor G a second chance to translocate the tRNAs correctly. Binds to ribosomes in a GTP-dependent manner. This chain is Elongation factor 4, found in Porphyromonas gingivalis (strain ATCC 33277 / DSM 20709 / CIP 103683 / JCM 12257 / NCTC 11834 / 2561).